A 169-amino-acid chain; its full sequence is Sec-independent protein translocase protein TatB (169 aa).

A helical membrane pass occupies residues 2 to 22 (SPGIGMPELLVVLVLALVVVG). A disordered region spans residues 106 to 169 (NQAETDADKA…AKPVDEIKGR (64 aa)).

Belongs to the TatB family. In terms of assembly, the Tat system comprises two distinct complexes: a TatABC complex, containing multiple copies of TatA, TatB and TatC subunits, and a separate TatA complex, containing only TatA subunits. Substrates initially bind to the TatABC complex, which probably triggers association of the separate TatA complex to form the active translocon.

The protein resides in the cell inner membrane. In terms of biological role, part of the twin-arginine translocation (Tat) system that transports large folded proteins containing a characteristic twin-arginine motif in their signal peptide across membranes. Together with TatC, TatB is part of a receptor directly interacting with Tat signal peptides. TatB may form an oligomeric binding site that transiently accommodates folded Tat precursor proteins before their translocation. The sequence is that of Sec-independent protein translocase protein TatB from Maricaulis maris (strain MCS10) (Caulobacter maris).